The chain runs to 634 residues: Microtubule-associated protein 70-2 (634 aa).

The tract at residues 1–57 (MSDVSGDGDLSATVTEHEVTPQPPVSSATYPSLTVSASYKESSGGKSSSKRRPIRPS) is disordered. Residues 25–35 (VSSATYPSLTV) are compositionally biased toward polar residues. Low complexity predominate over residues 36 to 47 (SASYKESSGGKS). Positions 74–392 (DPVKVELNRL…LRLKVLEETL (319 aa)) form a coiled coil. Residues 258–494 (ILDRMHRQKV…YSFNKATDDS (237 aa)) form a required for targeting to microtubules region. 2 stretches are compositionally biased toward polar residues: residues 393–417 (RGTS…SRRQ) and 443–464 (MRHS…TSKS). 2 disordered regions span residues 393-526 (RGTS…SVPG) and 594-634 (VEKD…KSTQ). Residues 532–601 (LQKEVVSLRK…MRVEKDQDAR (70 aa)) are a coiled coil. Residues 605-616 (FSNSKSPSNTAQ) show a composition bias toward polar residues.

It belongs to the MAP70 family.

The protein localises to the cytoplasm. It localises to the cytoskeleton. Plant-specific protein that interact with microtubules. The chain is Microtubule-associated protein 70-2 (MAP70.2) from Arabidopsis thaliana (Mouse-ear cress).